A 171-amino-acid polypeptide reads, in one-letter code: Small ribosomal subunit protein uS5 (171 aa).

Residues 15–78 (YEEKVVKIKR…EKAKKQLIRI (64 aa)) enclose the S5 DRBM domain.

The protein belongs to the universal ribosomal protein uS5 family. Part of the 30S ribosomal subunit. Contacts proteins S4 and S8.

In terms of biological role, with S4 and S12 plays an important role in translational accuracy. Located at the back of the 30S subunit body where it stabilizes the conformation of the head with respect to the body. This Phytoplasma australiense protein is Small ribosomal subunit protein uS5.